We begin with the raw amino-acid sequence, 371 residues long: Dual-specificity RNA methyltransferase RlmN (371 aa).

The Proton acceptor role is filled by glutamate 114. The Radical SAM core domain maps to 120-352; sequence EEDHFTLCVS…VMTRQSKGAD (233 aa). Cysteine 127 and cysteine 357 are joined by a disulfide. [4Fe-4S] cluster-binding residues include cysteine 134, cysteine 138, and cysteine 141. Residues 183–184, serine 216, 238–240, and asparagine 314 each bind S-adenosyl-L-methionine; these read GE and SLN. Cysteine 357 acts as the S-methylcysteine intermediate in catalysis.

The protein belongs to the radical SAM superfamily. RlmN family. [4Fe-4S] cluster is required as a cofactor.

It localises to the cytoplasm. The enzyme catalyses adenosine(2503) in 23S rRNA + 2 reduced [2Fe-2S]-[ferredoxin] + 2 S-adenosyl-L-methionine = 2-methyladenosine(2503) in 23S rRNA + 5'-deoxyadenosine + L-methionine + 2 oxidized [2Fe-2S]-[ferredoxin] + S-adenosyl-L-homocysteine. It catalyses the reaction adenosine(37) in tRNA + 2 reduced [2Fe-2S]-[ferredoxin] + 2 S-adenosyl-L-methionine = 2-methyladenosine(37) in tRNA + 5'-deoxyadenosine + L-methionine + 2 oxidized [2Fe-2S]-[ferredoxin] + S-adenosyl-L-homocysteine. Specifically methylates position 2 of adenine 2503 in 23S rRNA and position 2 of adenine 37 in tRNAs. m2A2503 modification seems to play a crucial role in the proofreading step occurring at the peptidyl transferase center and thus would serve to optimize ribosomal fidelity. The protein is Dual-specificity RNA methyltransferase RlmN of Desulfosudis oleivorans (strain DSM 6200 / JCM 39069 / Hxd3) (Desulfococcus oleovorans).